The chain runs to 64 residues: Putative neurotoxin 5 (64 aa).

Positions 1 to 18 (MKNKFAALVITLFVLVLA) are cleaved as a signal peptide.

It belongs to the scolopendra neurotoxin 6 family. Post-translationally, contains 3 disulfide bonds. As to expression, expressed by the venom gland.

Its subcellular location is the secreted. The sequence is that of Putative neurotoxin 5 from Scolopendra mutilans (Chinese red-headed centipede).